Reading from the N-terminus, the 497-residue chain is MNSNDNQRVIVIGAGLGGLSAAISLATAGFSVQLIEKNDKVGGKLNIMTKDGFTFDLGPSILTMPHIFEALFTGAGKNMADYVQIQKVEPHWRNFFEDGSVIDLCEDAETQRRELDKLGPGTYAQFQRFLDYSKNLCTETEAGYFAKGLDGFWDLLKFYGPLRSLLSFDVFRSMDQGVRRFISDPKLVEILNYFIKYVGSSPYDAPALMNLLPYIQYHYGLWYVKGGMYGMAQAMEKLAVELGVEIRLDAEVSEIQKQDGRACAVKLANGDVLPADIVVSNMEVIPAMEKLLRSPASELKKMQRFEPSCSGLVLHLGVDRLYPQLAHHNFFYSDHPREHFDAVFKSHRLSDDPTIYLVAPCKTDPAQAPAGCEIIKILPHIPHLDPDKLLTAEDYSALRERVLVKLERMGLTDLRQHIVTEEYWTPLDIQAKYYSNQGSIYGVVADRFKNLGFKAPQRSSELSNLYFVGGSVNPGGGMPMVTLSGQLVRDKIVADLQ.

It belongs to the carotenoid/retinoid oxidoreductase family. The cofactor is FAD.

The enzyme catalyses all-trans-4,4'-diapolycopene + 4 AH2 + 4 O2 = all-trans-4,4'-diapolycopene-4,4'-dial + 4 A + 6 H2O. It catalyses the reaction all-trans-4,4'-diaponeurosporene + 2 AH2 + 2 O2 = 4,4'-diaponeurosporenal + 2 A + 3 H2O. Its pathway is carotenoid biosynthesis. In terms of biological role, involved in the biosynthesis of C30 carotenoids. Catalyzes the oxidation of the terminal methyl side groups of 4,4'-diapolycopene to yield 4,4'-diapolycopen-4,4'-dial via the aldehyde intermediate 4,4'-diapolycopen-al. Also able to catalyze the oxidation of the terminal methyl side group of 4,4'-diaponeurosporene to form 4,4'-diaponeurosporen-4-al. It has moderate to low activity on the C40 substrates neurosporene and lycopene, and has no detectable activity on zeta-carotene or beta-carotene. The protein is 4,4'-diapolycopene oxygenase of Methylomonas sp.